The following is a 631-amino-acid chain: PTS system beta-glucoside-specific EIIBCA component (631 aa).

The region spanning 1 to 86 is the PTS EIIB type-1 domain; that stretch reads MNYETLASEI…LSLDGMARFS (86 aa). Cysteine 26 acts as the Phosphocysteine intermediate; for EIIB activity in catalysis. The PTS EIIC type-1 domain maps to 105 to 466; sequence DIISSIFTPF…DETQPAAADS (362 aa). The next 10 membrane-spanning stretches (helical) occupy residues 120-140, 146-166, 175-195, 206-226, 248-268, 295-315, 328-348, 358-378, 385-405, and 434-454; these read ATGILKGFLALGVATHVISES, LLFAASDALFYFFPIVLGYTA, FTTLVIGATLVHPSMIAAFNA, FLGIPITFINYSSSVIPILFA, FFTPLLCIVISVPLTFLLIGP, VMGALWQVCVIFGLHWGFVPL, LLPLLVPAVLGQAGATLGVLL, IAGSAFSAAIFGITEPAVYGV, PFIFGCIGGALGAAVMGYAHT, and AVIGTLLAFAFAALTSWSFGV. One can recognise a PTS EIIA type-1 domain in the interval 501-605; the sequence is DRTFASGVMG…DLTTPIVITN (105 aa). Residue histidine 553 is the Tele-phosphohistidine intermediate; for EIIA activity of the active site.

Its subcellular location is the cell inner membrane. The phosphoenolpyruvate-dependent sugar phosphotransferase system (sugar PTS), a major carbohydrate active -transport system, catalyzes the phosphorylation of incoming sugar substrates concomitantly with their translocation across the cell membrane. This system is involved in beta-glucoside transport. In terms of biological role, acts both as a kinase and as a phosphatase on ArbG. This chain is PTS system beta-glucoside-specific EIIBCA component (arbF), found in Dickeya chrysanthemi (Pectobacterium chrysanthemi).